Consider the following 224-residue polypeptide: 7-cyano-7-deazaguanine synthase (224 aa).

ATP is bound at residue 11-21; the sequence is FSGGQDSTTCL. Zn(2+)-binding residues include Cys-190, Cys-199, Cys-202, and Cys-205.

Belongs to the QueC family. Zn(2+) serves as cofactor.

The enzyme catalyses 7-carboxy-7-deazaguanine + NH4(+) + ATP = 7-cyano-7-deazaguanine + ADP + phosphate + H2O + H(+). The protein operates within purine metabolism; 7-cyano-7-deazaguanine biosynthesis. Its function is as follows. Catalyzes the ATP-dependent conversion of 7-carboxy-7-deazaguanine (CDG) to 7-cyano-7-deazaguanine (preQ(0)). The protein is 7-cyano-7-deazaguanine synthase of Parabacteroides distasonis (strain ATCC 8503 / DSM 20701 / CIP 104284 / JCM 5825 / NCTC 11152).